The chain runs to 455 residues: Exodeoxyribonuclease 7 large subunit (455 aa).

Belongs to the XseA family. Heterooligomer composed of large and small subunits.

It localises to the cytoplasm. The catalysed reaction is Exonucleolytic cleavage in either 5'- to 3'- or 3'- to 5'-direction to yield nucleoside 5'-phosphates.. Functionally, bidirectionally degrades single-stranded DNA into large acid-insoluble oligonucleotides, which are then degraded further into small acid-soluble oligonucleotides. The protein is Exodeoxyribonuclease 7 large subunit of Escherichia fergusonii (strain ATCC 35469 / DSM 13698 / CCUG 18766 / IAM 14443 / JCM 21226 / LMG 7866 / NBRC 102419 / NCTC 12128 / CDC 0568-73).